Here is a 450-residue protein sequence, read N- to C-terminus: Chromosomal replication initiator protein DnaA (450 aa).

Positions 1–69 (MHDVWRQATE…VGALSVTAGK (69 aa)) are domain I, interacts with DnaA modulators. A domain II region spans residues 69 to 113 (KKYFIELVVQEEDQNAEVPQAEDLIIKGHQEIEQPVTSQPETSSS). A domain III, AAA+ region region spans residues 114–330 (SLNPKYTFEL…GMLIRLGAYS (217 aa)). Glycine 158, glycine 160, lysine 161, and serine 162 together coordinate ATP. The interval 331–450 (SLQGIPITLD…IEDIKLILLK (120 aa)) is domain IV, binds dsDNA.

The protein belongs to the DnaA family. Oligomerizes as a right-handed, spiral filament on DNA at oriC.

The protein localises to the cytoplasm. Its function is as follows. Plays an essential role in the initiation and regulation of chromosomal replication. ATP-DnaA binds to the origin of replication (oriC) to initiate formation of the DNA replication initiation complex once per cell cycle. Binds the DnaA box (a 9 base pair repeat at the origin) and separates the double-stranded (ds)DNA. Forms a right-handed helical filament on oriC DNA; dsDNA binds to the exterior of the filament while single-stranded (ss)DNA is stabiized in the filament's interior. The ATP-DnaA-oriC complex binds and stabilizes one strand of the AT-rich DNA unwinding element (DUE), permitting loading of DNA polymerase. After initiation quickly degrades to an ADP-DnaA complex that is not apt for DNA replication. Binds acidic phospholipids. This Pelobacter propionicus (strain DSM 2379 / NBRC 103807 / OttBd1) protein is Chromosomal replication initiator protein DnaA.